Consider the following 204-residue polypeptide: Small ribosomal subunit protein uS4 (204 aa).

Positions 21 to 45 are disordered; it reads GRPKSPINKREYGPGQHGQRRKKPS. The S4 RNA-binding domain occupies 93-156; that stretch reads RRLDAVVYRM…KQLAMVLDSV (64 aa).

It belongs to the universal ribosomal protein uS4 family. Part of the 30S ribosomal subunit. Contacts protein S5. The interaction surface between S4 and S5 is involved in control of translational fidelity.

Functionally, one of the primary rRNA binding proteins, it binds directly to 16S rRNA where it nucleates assembly of the body of the 30S subunit. Its function is as follows. With S5 and S12 plays an important role in translational accuracy. The chain is Small ribosomal subunit protein uS4 from Acidiphilium cryptum (strain JF-5).